A 326-amino-acid chain; its full sequence is tRNA-dihydrouridine(20/20a) synthase (326 aa).

Residues 11–13 (PML) and Gln-63 contribute to the FMN site. Residue Cys-93 is the Proton donor of the active site. FMN is bound by residues Lys-132, His-165, 205 to 207 (NGG), and 227 to 228 (GR).

This sequence belongs to the Dus family. DusA subfamily. FMN serves as cofactor.

The catalysed reaction is 5,6-dihydrouridine(20) in tRNA + NADP(+) = uridine(20) in tRNA + NADPH + H(+). It carries out the reaction 5,6-dihydrouridine(20) in tRNA + NAD(+) = uridine(20) in tRNA + NADH + H(+). The enzyme catalyses 5,6-dihydrouridine(20a) in tRNA + NADP(+) = uridine(20a) in tRNA + NADPH + H(+). It catalyses the reaction 5,6-dihydrouridine(20a) in tRNA + NAD(+) = uridine(20a) in tRNA + NADH + H(+). Its function is as follows. Catalyzes the synthesis of 5,6-dihydrouridine (D), a modified base found in the D-loop of most tRNAs, via the reduction of the C5-C6 double bond in target uridines. Specifically modifies U20 and U20a in tRNAs. The protein is tRNA-dihydrouridine(20/20a) synthase of Vibrio parahaemolyticus serotype O3:K6 (strain RIMD 2210633).